Here is a 288-residue protein sequence, read N- to C-terminus: DegV domain-containing protein SAS0714 (288 aa).

The DegV domain maps to 3-282 (IAVMTDSTSY…SGGLGLGYVG (280 aa)). 2 residues coordinate hexadecanoate: threonine 62 and serine 95.

Functionally, may bind long-chain fatty acids, such as palmitate, and may play a role in lipid transport or fatty acid metabolism. In Staphylococcus aureus (strain MSSA476), this protein is DegV domain-containing protein SAS0714.